The chain runs to 152 residues: Ribonuclease H (152 aa).

Positions 1 to 142 (MDSKVVIYTD…ADKLAVQGRE (142 aa)) constitute an RNase H type-1 domain. 4 residues coordinate Mg(2+): aspartate 10, glutamate 48, aspartate 70, and aspartate 134.

This sequence belongs to the RNase H family. Monomer. Mg(2+) is required as a cofactor.

The protein resides in the cytoplasm. The enzyme catalyses Endonucleolytic cleavage to 5'-phosphomonoester.. Functionally, endonuclease that specifically degrades the RNA of RNA-DNA hybrids. The sequence is that of Ribonuclease H from Rickettsia felis (strain ATCC VR-1525 / URRWXCal2) (Rickettsia azadi).